The following is a 389-amino-acid chain: Succinate--CoA ligase [ADP-forming] subunit beta (389 aa).

The 236-residue stretch at K9–R244 folds into the ATP-grasp domain. Residues K46, G53–G55, I102, and E107 each bind ATP. The Mg(2+) site is built by N199 and D213. Residues N264 and G321–M323 each bind substrate.

Belongs to the succinate/malate CoA ligase beta subunit family. In terms of assembly, heterotetramer of two alpha and two beta subunits. It depends on Mg(2+) as a cofactor.

The enzyme catalyses succinate + ATP + CoA = succinyl-CoA + ADP + phosphate. The catalysed reaction is GTP + succinate + CoA = succinyl-CoA + GDP + phosphate. Its pathway is carbohydrate metabolism; tricarboxylic acid cycle; succinate from succinyl-CoA (ligase route): step 1/1. Functionally, succinyl-CoA synthetase functions in the citric acid cycle (TCA), coupling the hydrolysis of succinyl-CoA to the synthesis of either ATP or GTP and thus represents the only step of substrate-level phosphorylation in the TCA. The beta subunit provides nucleotide specificity of the enzyme and binds the substrate succinate, while the binding sites for coenzyme A and phosphate are found in the alpha subunit. The polypeptide is Succinate--CoA ligase [ADP-forming] subunit beta (Protochlamydia amoebophila (strain UWE25)).